A 601-amino-acid polypeptide reads, in one-letter code: Glutathione-regulated potassium-efflux system protein KefB (601 aa).

Transmembrane regions (helical) follow at residues 4–24 (ADLL…VPLA), 29–49 (IGAV…GLGF), 55–75 (EILH…GLEL), 87–107 (IFGV…GLLM), 111–131 (FLWQ…TAMA), 152–172 (VLLF…LLAG), 177–197 (HFDW…LIGG), 207–227 (FIAA…LVLS), 230–250 (LFMD…GVLL), 262–282 (AIDP…GMSL), 284–304 (LGVL…LVVI), 324–344 (MQFA…FSTA), and 356–376 (ALLL…MKGI). Residues 400 to 519 (KPQVIVVGFG…AGVTQFSRET (120 aa)) enclose the RCK N-terminal domain.

This sequence belongs to the monovalent cation:proton antiporter 2 (CPA2) transporter (TC 2.A.37) family. KefB subfamily. In terms of assembly, interacts with the regulatory subunit KefG.

Its subcellular location is the cell inner membrane. In terms of biological role, pore-forming subunit of a potassium efflux system that confers protection against electrophiles. Catalyzes K(+)/H(+) antiport. The chain is Glutathione-regulated potassium-efflux system protein KefB from Salmonella enteritidis PT4 (strain P125109).